The chain runs to 75 residues: Small ribosomal subunit protein bS18c (75 aa).

It belongs to the bacterial ribosomal protein bS18 family. In terms of assembly, part of the 30S ribosomal subunit.

It is found in the plastid. The protein resides in the chloroplast. In Marchantia polymorpha (Common liverwort), this protein is Small ribosomal subunit protein bS18c (rps18).